The primary structure comprises 225 residues: Uracil-DNA glycosylase (225 aa).

The active-site Proton acceptor is Asp-64.

This sequence belongs to the uracil-DNA glycosylase (UDG) superfamily. UNG family.

It localises to the cytoplasm. The catalysed reaction is Hydrolyzes single-stranded DNA or mismatched double-stranded DNA and polynucleotides, releasing free uracil.. Its function is as follows. Excises uracil residues from the DNA which can arise as a result of misincorporation of dUMP residues by DNA polymerase or due to deamination of cytosine. This chain is Uracil-DNA glycosylase, found in Lachnoclostridium phytofermentans (strain ATCC 700394 / DSM 18823 / ISDg) (Clostridium phytofermentans).